Here is a 319-residue protein sequence, read N- to C-terminus: 7,8-didemethyl-8-hydroxy-5-deazariboflavin synthase (319 aa).

The 232-residue stretch at 5-236 folds into the Radical SAM core domain; that stretch reads VTYSPAYTIV…SNITLQIPPN (232 aa). Residues C19, C23, and C26 each coordinate [4Fe-4S] cluster.

This sequence belongs to the radical SAM superfamily. CofG family. Consists of two subunits, CofG and CofH. Requires [4Fe-4S] cluster as cofactor.

It carries out the reaction 5-amino-5-(4-hydroxybenzyl)-6-(D-ribitylimino)-5,6-dihydrouracil + S-adenosyl-L-methionine = 7,8-didemethyl-8-hydroxy-5-deazariboflavin + 5'-deoxyadenosine + L-methionine + NH4(+) + H(+). It functions in the pathway cofactor biosynthesis; coenzyme F0 biosynthesis. Its function is as follows. Catalyzes the radical-mediated synthesis of 7,8-didemethyl-8-hydroxy-5-deazariboflavin from 5-amino-5-(4-hydroxybenzyl)-6-(D-ribitylimino)-5,6-dihydrouracil. The sequence is that of 7,8-didemethyl-8-hydroxy-5-deazariboflavin synthase from Trichodesmium erythraeum (strain IMS101).